Reading from the N-terminus, the 831-residue chain is Periplasmic nitrate reductase (831 aa).

The tat-type signal signal peptide spans 1-29; it reads MKVSRRDFIKQTAIAATASVAGIPLGTEA. The region spanning 41–97 is the 4Fe-4S Mo/W bis-MGD-type domain; that stretch reads LKWSKAPCRFCGTGCGVTVAVRDNKVVATQGDPQCEVNKGLNCVKGYFLSKIMYGQD. C48, C51, C55, and C83 together coordinate [4Fe-4S] cluster. Mo-bis(molybdopterin guanine dinucleotide) contacts are provided by residues K85, Q152, N177, C181, 214–221, 245–249, 264–266, M375, Q379, N485, 511–512, K534, D561, and 721–730; these read WGSNMAEM, STFTH, QTD, SD, and TGRVLEHWHS. W797 lines the substrate pocket. Mo-bis(molybdopterin guanine dinucleotide) contacts are provided by N805 and K822.

It belongs to the prokaryotic molybdopterin-containing oxidoreductase family. NasA/NapA/NarB subfamily. In terms of assembly, component of the periplasmic nitrate reductase NapAB complex composed of NapA and NapB. [4Fe-4S] cluster serves as cofactor. The cofactor is Mo-bis(molybdopterin guanine dinucleotide). In terms of processing, predicted to be exported by the Tat system. The position of the signal peptide cleavage has not been experimentally proven.

It localises to the periplasm. It carries out the reaction 2 Fe(II)-[cytochrome] + nitrate + 2 H(+) = 2 Fe(III)-[cytochrome] + nitrite + H2O. Catalytic subunit of the periplasmic nitrate reductase complex NapAB. Receives electrons from NapB and catalyzes the reduction of nitrate to nitrite. The sequence is that of Periplasmic nitrate reductase from Cupriavidus pinatubonensis (strain JMP 134 / LMG 1197) (Cupriavidus necator (strain JMP 134)).